The primary structure comprises 83 residues: MNIILFYFMPILISLPGLLASGTYPNDVYGLTYDCGKLGENEHCLKICKIHGVEYGYCYGWRCWCDKLSDKNKLFWDVYKEHC.

Positions 1 to 21 (MNIILFYFMPILISLPGLLAS) are cleaved as a signal peptide. One can recognise an LCN-type CS-alpha/beta domain in the interval 22–83 (GTYPNDVYGL…LFWDVYKEHC (62 aa)). Intrachain disulfides connect Cys-35-Cys-58, Cys-44-Cys-63, and Cys-48-Cys-65.

It belongs to the long (3 C-C) scorpion toxin superfamily. In terms of assembly, monomer (edited version) and heterodimer (non-edited version) of this alpha chain and a beta chain (AC P0CI43). As to expression, expressed by the venom gland.

Its subcellular location is the secreted. Its function is as follows. The heterodimer non-edited LVP1 induces lipolysis in rat adipocytes. Induction of lipolysis by LVP1 appears to be mediated through the beta-2 adrenergic receptor pathway (ADRB2). Functionally, the edited BmKBTx-like, similar to beta-toxins, may modulate voltage-gated sodium channels (Nav) and may block voltage-gated potassium channels (Kv). The polypeptide is Lipolysis-activating peptide 1-alpha chain (Lychas mucronatus (Chinese swimming scorpion)).